The primary structure comprises 721 residues: bZIP transcription factor 17 (721 aa).

Disordered stretches follow at residues 1–51 (MAEP…LMSD) and 87–232 (QEQF…EKKR). Over 1 to 366 (MAEPITKEQP…KSEAKTKKVA (366 aa)) the chain is Cytoplasmic. Residues 9–25 (QPPPPAPDPNSTYPPPS) show a composition bias toward pro residues. The segment covering 125 to 141 (ESPRDSDDRCSGADHNL) has biased composition (basic and acidic residues). Residues 146–170 (PLSSQGSGNCGSDVSEATNESSPKS) are compositionally biased toward polar residues. Over residues 204–216 (DESRNSKYRRSGE) the composition is skewed to basic and acidic residues. In terms of domain architecture, bZIP spans 228 to 288 (DEKKRARLMR…AENATLRQQL (61 aa)). The interval 230-261 (KKRARLMRNRESAQLSRQRKKHYVEELEEKVR) is basic motif. A leucine-zipper region spans residues 267 to 274 (ITDLNGKI). Residues 337-359 (PRLKPQNTLGTSKAKKSESKKSE) form a disordered region. The chain crosses the membrane as a helical span at residues 367–387 (SISFLGLLFCLFLFGALAPIV). The Lumenal segment spans residues 388-721 (NVNYGGISGA…RSGAPHLVTT (334 aa)). Residues 422 to 436 (TSRSGAGTGVSNSNG) show a composition bias toward polar residues. The disordered stretch occupies residues 422-462 (TSRSGAGTGVSNSNGMHRGRDSDRGARKNISATESSVTPGN). N-linked (GlcNAc...) asparagine glycans are attached at residues Asn-450, Asn-462, Asn-609, and Asn-617. The segment covering 451–462 (ISATESSVTPGN) has biased composition (polar residues). The short motif at 627–630 (RRIL) is the RRIL cleavage motif element. 2 N-linked (GlcNAc...) asparagine glycosylation sites follow: Asn-643 and Asn-651.

Belongs to the bZIP family. Interacts with BZIP28.

It localises to the endoplasmic reticulum membrane. The protein localises to the golgi apparatus membrane. Its subcellular location is the nucleus. Functionally, transcriptional activator involved in salt and osmotic stress responses. Functions as a stress sensor and transducer in a signaling pathway that resembles an ER stress response. Following salt stress, BZIP17 is cleaved by SBT6.1 (S1P) and S2P at the C-terminus and the N-terminal bZIP component is translocated to the nucleus, where it activates the expression of salt stress response genes. Functions as a stress sensor and transducer in ER stress signaling pathway. ER stress induces proteolysis of BZIP17 by SBT6.1 (S1P) and S2P, and the N-terminal bZIP component is translocated to the nucleus, where it activates the expression and production of ER chaperones, as well as protein involved in brassinosteroid (BR) signaling, which is required for stress acclimation and growth. This Arabidopsis thaliana (Mouse-ear cress) protein is bZIP transcription factor 17.